The chain runs to 181 residues: Oleosin (181 aa).

Residues 1 to 28 (TTTTYDRHFTTTQPHYRQDDRSRYDQQT) are disordered. The segment at 1 to 38 (TTTTYDRHFTTTQPHYRQDDRSRYDQQTHSQSTSRTLA) is polar. The span at 16 to 26 (YRQDDRSRYDQ) shows a compositional bias: basic and acidic residues. 3 helical membrane passes run 38–58 (AIIA…LTFI), 69–89 (PLFV…GLAV), and 90–110 (TGFL…SYLF). Residues 39–110 (IIALLPVGGI…TGLSSLSYLF (72 aa)) form a hydrophobic region. The segment at 155–181 (EMGDQGQVGVHAQVGGGKEGRKSGDRT) is disordered. Positions 158 to 167 (DQGQVGVHAQ) are enriched in low complexity. The span at 172 to 181 (KEGRKSGDRT) shows a compositional bias: basic and acidic residues.

This sequence belongs to the oleosin family.

The protein resides in the lipid droplet. It localises to the membrane. Functionally, may have a structural role to stabilize the lipid body during desiccation of the seed by preventing coalescence of the oil. Probably interacts with both lipid and phospholipid moieties of lipid bodies. May also provide recognition signals for specific lipase anchorage in lipolysis during seedling growth. This chain is Oleosin, found in Helianthus annuus (Common sunflower).